The primary structure comprises 973 residues: Leucine--tRNA ligase, chloroplastic/mitochondrial (973 aa).

Positions proline 126–histidine 135 match the 'HIGH' region motif. Residues lysine 730–serine 734 carry the 'KMSKS' region motif. Lysine 733 is an ATP binding site.

It belongs to the class-I aminoacyl-tRNA synthetase family.

Its subcellular location is the plastid. The protein localises to the chloroplast. The protein resides in the mitochondrion. It carries out the reaction tRNA(Leu) + L-leucine + ATP = L-leucyl-tRNA(Leu) + AMP + diphosphate. In terms of biological role, catalyzes the specific attachment of an amino acid to its cognate tRNA in a two step reaction: the amino acid (AA) is first activated by ATP to form AA-AMP and then transferred to the acceptor end of the tRNA. This Arabidopsis thaliana (Mouse-ear cress) protein is Leucine--tRNA ligase, chloroplastic/mitochondrial.